Here is a 1441-residue protein sequence, read N- to C-terminus: Envelopment polyprotein (1441 aa).

The N-terminal stretch at M1 to A13 is a signal peptide. Topologically, residues S14–N200 are lumenal. Residue N57 is glycosylated (N-linked (GlcNAc...) asparagine; by host). A membrane pass occupies residues I201–S221. The Cytoplasmic portion of the chain corresponds to K222–K305. Over G306–I326 the chain traverses the membrane. The Lumenal portion of the chain corresponds to N327 to C361. Over I362–F382 the chain traverses the membrane. Residues K383 to W450 lie on the Cytoplasmic side of the membrane. The hydrophobic stretch at M451–V471 threads the membrane. The Lumenal segment spans residues Q472–Y1395. N-linked (GlcNAc...) asparagine; by host glycosylation is present at N490. A fusion peptide region spans residues W1066–D1087. N-linked (GlcNAc...) asparagine; by host glycosylation occurs at N1177. A membrane pass occupies residues I1396–L1416. The Cytoplasmic segment spans residues L1417–A1433.

It belongs to the orthobunyaviruses M polyprotein family. As to quaternary structure, glycoprotein C and Glycoprotein N interact with each other.

The protein resides in the virion membrane. It localises to the host Golgi apparatus membrane. It is found in the host endoplasmic reticulum membrane. Its function is as follows. Glycoprotein C and glycoprotein N interact with each other and are present at the surface of the virion. They are able to attach the virion to a cell receptor and to promote fusion of membranes after endocytosis of the virion. The chain is Envelopment polyprotein (GP) from Bunyavirus La Crosse (isolate Human/United States/L78/1978).